We begin with the raw amino-acid sequence, 334 residues long: Putative B3 domain-containing protein At5g66980 (334 aa).

2 consecutive DNA-binding regions (TF-B3) follow at residues 8–105 and 218–317; these read LQFF…FAND and HPHF…VSGR.

The protein localises to the nucleus. The polypeptide is Putative B3 domain-containing protein At5g66980 (Arabidopsis thaliana (Mouse-ear cress)).